The chain runs to 641 residues: SUMO-activating enzyme subunit 2 (641 aa).

ATP contacts are provided by residues 24-29, Asp48, 56-59, Lys72, 95-96, and 117-122; these read GAGGIG, NLNR, SI, and DNNAAR. Zn(2+) is bound by residues Cys158 and Cys161. Cys173 functions as the Glycyl thioester intermediate in the catalytic mechanism. A Glycyl lysine isopeptide (Lys-Gly) (interchain with G-Cter in SUMO) cross-link involves residue Lys190. Lys236 is covalently cross-linked (Glycyl lysine isopeptide (Lys-Gly) (interchain with G-Cter in SUMO1)). Glycyl lysine isopeptide (Lys-Gly) (interchain with G-Cter in SUMO) cross-links involve residues Lys257 and Lys275. Residues Cys439 and Cys442 each coordinate Zn(2+). A disordered region spans residues 546–641; the sequence is GDVPEKGPQK…EEDDDIIALD (96 aa). Positions 556–579 are enriched in polar residues; sequence PSEQSVKNITNGSDDGAQPSTSKA. Positions 582–594 are enriched in acidic residues; sequence QDDVLIVDSDEES. Glycyl lysine isopeptide (Lys-Gly) (interchain with G-Cter in SUMO) cross-links involve residues Lys610, Lys612, and Lys623. Residues 630-641 are compositionally biased toward acidic residues; sequence PVEEDDDIIALD.

The protein belongs to the ubiquitin-activating E1 family. Heterodimer of sae1 and uba2/sae2. The heterodimer corresponds to the two domains that are encoded on a single polypeptide chain in ubiquitin-activating enzyme E1. Interacts with ube2i. Post-translationally, sumoylated with SUMO1 and SUMO2/3 and by UBC9. Sumoylation at Lys-236 inhibits enzymatic activity. Sumoylation at the C-terminal lysine cluster plays an essential role in nuclear trafficking.

The protein localises to the cytoplasm. Its subcellular location is the nucleus. Its pathway is protein modification; protein sumoylation. The heterodimer acts as an E1 ligase for sumo1, sumo2, and sumo3. It mediates ATP-dependent activation of sumo proteins followed by formation of a thioester bond between a sumo protein and a conserved active site cysteine residue on uba2/sae2. The polypeptide is SUMO-activating enzyme subunit 2 (uba2) (Xenopus tropicalis (Western clawed frog)).